Consider the following 256-residue polypeptide: Thiazole synthase (256 aa).

Lys95 (schiff-base intermediate with DXP) is an active-site residue. 1-deoxy-D-xylulose 5-phosphate contacts are provided by residues Gly156, 182–183 (AG), and 204–205 (NT).

The protein belongs to the ThiG family. Homotetramer. Forms heterodimers with either ThiH or ThiS.

The protein resides in the cytoplasm. It carries out the reaction [ThiS sulfur-carrier protein]-C-terminal-Gly-aminoethanethioate + 2-iminoacetate + 1-deoxy-D-xylulose 5-phosphate = [ThiS sulfur-carrier protein]-C-terminal Gly-Gly + 2-[(2R,5Z)-2-carboxy-4-methylthiazol-5(2H)-ylidene]ethyl phosphate + 2 H2O + H(+). The protein operates within cofactor biosynthesis; thiamine diphosphate biosynthesis. Functionally, catalyzes the rearrangement of 1-deoxy-D-xylulose 5-phosphate (DXP) to produce the thiazole phosphate moiety of thiamine. Sulfur is provided by the thiocarboxylate moiety of the carrier protein ThiS. In vitro, sulfur can be provided by H(2)S. The protein is Thiazole synthase of Salmonella arizonae (strain ATCC BAA-731 / CDC346-86 / RSK2980).